The primary structure comprises 217 residues: MAETSNSENKTSEEAKASEKNSRSITLEETKLENMNSEESTQTTESTQAQAAEAADSELSLQSELDAAKKEVESLKDSWARERAEFQNFKRRSAQEFVSIRKEAVKSLVSGFLNPIDNLERVGATQSPSEELKPFVEGVAMILKEFYAVLEKSNVIRFDPKGESFDPMSMEALSSEEGDQYSEETVIDVYQAGYYYKENEDKFTLRPARVRIGKPKS.

Residues 1 to 63 (MAETSNSENK…AADSELSLQS (63 aa)) form a disordered region. The segment covering 10-32 (KTSEEAKASEKNSRSITLEETKL) has biased composition (basic and acidic residues). Residues 37–63 (SEESTQTTESTQAQAAEAADSELSLQS) show a composition bias toward low complexity.

This sequence belongs to the GrpE family. As to quaternary structure, homodimer.

Its subcellular location is the cytoplasm. In terms of biological role, participates actively in the response to hyperosmotic and heat shock by preventing the aggregation of stress-denatured proteins, in association with DnaK and GrpE. It is the nucleotide exchange factor for DnaK and may function as a thermosensor. Unfolded proteins bind initially to DnaJ; upon interaction with the DnaJ-bound protein, DnaK hydrolyzes its bound ATP, resulting in the formation of a stable complex. GrpE releases ADP from DnaK; ATP binding to DnaK triggers the release of the substrate protein, thus completing the reaction cycle. Several rounds of ATP-dependent interactions between DnaJ, DnaK and GrpE are required for fully efficient folding. This Leptospira borgpetersenii serovar Hardjo-bovis (strain JB197) protein is Protein GrpE.